A 209-amino-acid chain; its full sequence is Ion-translocating oxidoreductase complex subunit G (209 aa).

At 1–8 (MLTAIRKN) the chain is on the cytoplasmic side. The helical transmembrane segment at 9-29 (GLILAVFACVSTGLVALTYAL) threads the bilayer. The Periplasmic portion of the chain corresponds to 30–209 (TAEQIQQQEQ…HNQPNPCEGQ (180 aa)). T175 bears the FMN phosphoryl threonine mark.

It belongs to the RnfG family. As to quaternary structure, the complex is composed of six subunits: RnfA, RnfB, RnfC, RnfD, RnfE and RnfG. FMN serves as cofactor.

It localises to the cell inner membrane. Its function is as follows. Part of a membrane-bound complex that couples electron transfer with translocation of ions across the membrane. This chain is Ion-translocating oxidoreductase complex subunit G, found in Vibrio cholerae serotype O1 (strain ATCC 39541 / Classical Ogawa 395 / O395).